The following is a 193-amino-acid chain: MAASAWLEAGLARVLFYPTLLYTVFRGRVGGPAHRDWYHRIDHTVLLGALPLRSMTRRLVLDENVRGVITMNEEYETRFLCNTSKEWKNVGVEQLRLSTVDMTGVPTLANLHRGVQFALKYQSLGQCVYVHCKAGRSRSATMVAAYLIQVHNWSPEEAIEAIAKIRSHISIRPSQLEILKEFHKEIAARAAKN.

A mitochondrion-targeting transit peptide spans 1–31; sequence MAASAWLEAGLARVLFYPTLLYTVFRGRVGG. The region spanning 37–188 is the Tyrosine-protein phosphatase domain; sequence WYHRIDHTVL…LKEFHKEIAA (152 aa). Position 85 is an N6-succinyllysine (lysine 85). Residue cysteine 132 is the Phosphocysteine intermediate of the active site.

Belongs to the protein-tyrosine phosphatase family. Non-receptor class dual specificity subfamily. As to quaternary structure, interacts with STYXL1; the interaction inhibits PTPMT1 catalytic activity. In terms of tissue distribution, expressed in liver and in pancreatic beta cells.

Its subcellular location is the mitochondrion inner membrane. The catalysed reaction is O-phospho-L-tyrosyl-[protein] + H2O = L-tyrosyl-[protein] + phosphate. It catalyses the reaction O-phospho-L-seryl-[protein] + H2O = L-seryl-[protein] + phosphate. The enzyme catalyses O-phospho-L-threonyl-[protein] + H2O = L-threonyl-[protein] + phosphate. It carries out the reaction a 1,2-diacyl-sn-glycero-3-phospho-(1'-sn-glycero-3'-phosphate) + H2O = a 1,2-diacyl-sn-glycero-3-phospho-(1'-sn-glycerol) + phosphate. The catalysed reaction is 1,2-di-(9Z-octadecenoyl)-sn-glycero-3-phospho-(1'-sn-glycerol-3'-phosphate) + H2O = 1,2-di-(9Z-octadecenoyl)-sn-glycero-3-phospho-(1'-sn-glycerol) + phosphate. It catalyses the reaction 1,2-dioctanoyl-sn-glycero-3-phospho-(1D-myo-inositol-5-phosphate) + H2O = 1,2-dioctanoyl-sn-glycero-3-phospho-(1D-myo-inositol) + phosphate. The enzyme catalyses a 1-acyl-2-hexanoyl-sn-glycero-3-phospho-(1D-myo-inositol-5-phosphate) + H2O = a 1-acyl-2-hexanoyl-sn-glycero-3-phospho-(1D-myo-inositol) + phosphate. It carries out the reaction 1,2-dibutyryl-sn-glycero-3-phospho-(1D-myo-inositol-5-phosphate) + H2O = 1,2-dibutyryl-sn-glycero-3-phospho-(1D-myo-inositol) + phosphate. Its pathway is phospholipid metabolism; phosphatidylglycerol biosynthesis; phosphatidylglycerol from CDP-diacylglycerol: step 2/2. Functionally, lipid phosphatase which dephosphorylates phosphatidylglycerophosphate (PGP) to phosphatidylglycerol (PG). PGP is an essential intermediate in the biosynthetic pathway of cardiolipin, a mitochondrial-specific phospholipid regulating the membrane integrity and activities of the organelle. Has also been shown to display phosphatase activity toward phosphoprotein substrates, specifically mediates dephosphorylation of mitochondrial proteins, thereby playing an essential role in ATP production. Has probably a preference for proteins phosphorylated on Ser and/or Thr residues compared to proteins phosphorylated on Tyr residues. Probably involved in regulation of insulin secretion in pancreatic beta cells. May prevent intrinsic apoptosis, probably by regulating mitochondrial membrane integrity. The polypeptide is Phosphatidylglycerophosphatase and protein-tyrosine phosphatase 1 (Rattus norvegicus (Rat)).